A 340-amino-acid chain; its full sequence is Nesprin-4 (340 aa).

2 disordered regions span residues 1–86 (MAQF…DGGK) and 254–277 (HRRRLQKPQDKKRQGPPSLPDAML). Residues 1–291 (MAQFPLLGHG…GVPAPASRRP (291 aa)) lie on the Cytoplasmic side of the membrane. Basic and acidic residues predominate over residues 53-63 (APEHFMDEPKS). One can recognise a KASH domain in the interval 283–340 (VPAPASRRPLTFLLLLLFLLLVGATLLLPLSGVPCCSHTRLARTPYLVLSYVNGLPPI). Residues 292–312 (LTFLLLLLFLLLVGATLLLPL) traverse the membrane as a helical; Anchor for type IV membrane protein segment. Topologically, residues 313-340 (SGVPCCSHTRLARTPYLVLSYVNGLPPI) are perinuclear space.

Belongs to the nesprin family. As to quaternary structure, core component of LINC complexes which are composed of inner nuclear membrane SUN domain-containing proteins coupled to outer nuclear membrane KASH domain-containing nesprins. SUN and KASH domain-containing proteins seem to bind each other promiscuously; however, differentially expression of LINC complex constituents can give rise to specific assemblies. Probably part of a SUN1-containing LINC complex. Interacts with kinesins KIF5B and KLC1.

Its subcellular location is the nucleus outer membrane. Its function is as follows. As a component of the LINC (LInker of Nucleoskeleton and Cytoskeleton) complex, involved in the connection between the nuclear lamina and the cytoskeleton. The nucleocytoplasmic interactions established by the LINC complex play an important role in the transmission of mechanical forces across the nuclear envelope and in nuclear movement and positioning. Behaves as a kinesin cargo, providing a functional binding site for kinesin-1 at the nuclear envelope. Hence may contribute to the establishment of secretory epithelial morphology, by promoting kinesin-dependent apical migration of the centrosome and Golgi apparatus and basal localization of the nucleus. The sequence is that of Nesprin-4 (Syne4) from Rattus norvegicus (Rat).